The chain runs to 132 residues: Large ribosomal subunit protein bL17 (132 aa).

Belongs to the bacterial ribosomal protein bL17 family. As to quaternary structure, part of the 50S ribosomal subunit. Contacts protein L32.

This chain is Large ribosomal subunit protein bL17, found in Shewanella woodyi (strain ATCC 51908 / MS32).